The sequence spans 221 residues: Casparian strip membrane protein 2 (221 aa).

A disordered region spans residues 1 to 21 (MEKSEATTIEIGETSRESKGK). At 1–41 (MEKSEATTIEIGETSRESKGKTPLLAEVEQTARTAGSYRRG) the chain is on the cytoplasmic side. A helical membrane pass occupies residues 42 to 62 (VAIFDLILRVSAATSALAATI). The Extracellular segment spans residues 63 to 89 (TMGTTEQTLPFFTQFFQFQASYDDLPA). A helical membrane pass occupies residues 90–110 (FTFFVIALSIVTGYLVLSVPF). Topologically, residues 111–131 (SVVCIAQPLAAVPRLLLIVCD) are cytoplasmic. The helical transmembrane segment at 132 to 152 (TLTVTLATAAASSSAAIVYLA) threads the bilayer. The Extracellular portion of the chain corresponds to 153-221 (HNGNADANWL…HYWDRRWCEI (69 aa)).

It belongs to the Casparian strip membrane proteins (CASP) family. As to quaternary structure, homodimer and heterodimers.

Its subcellular location is the cell membrane. In terms of biological role, regulates membrane-cell wall junctions and localized cell wall deposition. Required for establishment of the Casparian strip membrane domain (CSD) and the subsequent formation of Casparian strips, a cell wall modification of the root endodermis that determines an apoplastic barrier between the intraorganismal apoplasm and the extraorganismal apoplasm and prevents lateral diffusion. This Erythranthe guttata (Yellow monkey flower) protein is Casparian strip membrane protein 2.